We begin with the raw amino-acid sequence, 78 residues long: uncharacterized protein (78 aa).

Basic and acidic residues predominate over residues 56–66; the sequence is ERANAGKRVSE. The tract at residues 56-78 is disordered; sequence ERANAGKRVSEEEQINGKRKRKD.

This is an uncharacterized protein from Saccharomyces cerevisiae (strain ATCC 204508 / S288c) (Baker's yeast).